A 61-amino-acid polypeptide reads, in one-letter code: Large ribosomal subunit protein uL30 (61 aa).

The protein belongs to the universal ribosomal protein uL30 family. In terms of assembly, part of the 50S ribosomal subunit.

In Shewanella piezotolerans (strain WP3 / JCM 13877), this protein is Large ribosomal subunit protein uL30.